Here is an 804-residue protein sequence, read N- to C-terminus: Ral guanine nucleotide dissociation stimulator-like 1 (804 aa).

The N-terminal Ras-GEF domain occupies 101–231 (KIRSIRAGTL…RAQSLLEQLR (131 aa)). Positions 270–539 (EVDLVAEQLT…YVLSCEVEGL (270 aa)) constitute a Ras-GEF domain. 2 disordered regions span residues 564–611 (NDST…TPTH) and 640–676 (SASI…GFPP). Low complexity-rich tracts occupy residues 581–607 (PTGS…SDGM) and 640–649 (SASISLASPT). A compositionally biased stretch (polar residues) spans 661-671 (ISLTPLMSPTS). One can recognise a Ras-associating domain in the interval 684 to 771 (DACIIRVSLE…FDFLLRLRGS (88 aa)).

In terms of biological role, probable guanine nucleotide exchange factor. This is Ral guanine nucleotide dissociation stimulator-like 1 (rgl1) from Danio rerio (Zebrafish).